Here is a 348-residue protein sequence, read N- to C-terminus: Holliday junction branch migration complex subunit RuvB (348 aa).

The segment covering 1–10 has biased composition (polar residues); it reads MAIVSSNAGS. The disordered stretch occupies residues 1 to 41; the sequence is MAIVSSNAGSSAPRREPVLDAQPLPEESSGRPDDGLRPKRL. The large ATPase domain (RuvB-L) stretch occupies residues 13 to 197; the sequence is PRREPVLDAQ…FGLIQRLEFY (185 aa). Positions 28–41 are enriched in basic and acidic residues; that stretch reads SSGRPDDGLRPKRL. Residues L36, R37, G78, K81, T82, T83, R187, Y197, and R234 each contribute to the ATP site. T82 serves as a coordination point for Mg(2+). Residues 198–269 form a small ATPAse domain (RuvB-S) region; that stretch reads GQEDLEAIVS…LVSQALSLHR (72 aa). Positions 272–348 are head domain (RuvB-H); sequence HRGLDAGDRR…RAHLREQEVA (77 aa). Residues R327 and R332 each contribute to the DNA site.

The protein belongs to the RuvB family. Homohexamer. Forms an RuvA(8)-RuvB(12)-Holliday junction (HJ) complex. HJ DNA is sandwiched between 2 RuvA tetramers; dsDNA enters through RuvA and exits via RuvB. An RuvB hexamer assembles on each DNA strand where it exits the tetramer. Each RuvB hexamer is contacted by two RuvA subunits (via domain III) on 2 adjacent RuvB subunits; this complex drives branch migration. In the full resolvosome a probable DNA-RuvA(4)-RuvB(12)-RuvC(2) complex forms which resolves the HJ.

It localises to the cytoplasm. It carries out the reaction ATP + H2O = ADP + phosphate + H(+). In terms of biological role, the RuvA-RuvB-RuvC complex processes Holliday junction (HJ) DNA during genetic recombination and DNA repair, while the RuvA-RuvB complex plays an important role in the rescue of blocked DNA replication forks via replication fork reversal (RFR). RuvA specifically binds to HJ cruciform DNA, conferring on it an open structure. The RuvB hexamer acts as an ATP-dependent pump, pulling dsDNA into and through the RuvAB complex. RuvB forms 2 homohexamers on either side of HJ DNA bound by 1 or 2 RuvA tetramers; 4 subunits per hexamer contact DNA at a time. Coordinated motions by a converter formed by DNA-disengaged RuvB subunits stimulates ATP hydrolysis and nucleotide exchange. Immobilization of the converter enables RuvB to convert the ATP-contained energy into a lever motion, pulling 2 nucleotides of DNA out of the RuvA tetramer per ATP hydrolyzed, thus driving DNA branch migration. The RuvB motors rotate together with the DNA substrate, which together with the progressing nucleotide cycle form the mechanistic basis for DNA recombination by continuous HJ branch migration. Branch migration allows RuvC to scan DNA until it finds its consensus sequence, where it cleaves and resolves cruciform DNA. The polypeptide is Holliday junction branch migration complex subunit RuvB (Parasynechococcus marenigrum (strain WH8102)).